The following is a 350-amino-acid chain: Peroxidase 10 (350 aa).

Residues 1 to 27 (MDHKMSMYLFVSYLAIFTLFFKGFVSS) form the signal peptide. 4 disulfides stabilise this stretch: cysteine 57-cysteine 137, cysteine 90-cysteine 95, cysteine 143-cysteine 346, and cysteine 222-cysteine 256. The active-site Proton acceptor is the histidine 88. Positions 89, 92, 94, 96, and 98 each coordinate Ca(2+). Asparagine 102 carries N-linked (GlcNAc...) asparagine glycosylation. Substrate is bound at residue proline 185. N-linked (GlcNAc...) asparagine glycosylation is present at asparagine 193. Histidine 215 contacts heme b. Residue threonine 216 participates in Ca(2+) binding. Ca(2+) contacts are provided by aspartate 270, serine 273, and aspartate 278.

It belongs to the peroxidase family. Classical plant (class III) peroxidase subfamily. Requires heme b as cofactor. Ca(2+) serves as cofactor. Expressed in the whole plant, with the highest expression in roots.

The protein resides in the secreted. The enzyme catalyses 2 a phenolic donor + H2O2 = 2 a phenolic radical donor + 2 H2O. In terms of biological role, removal of H(2)O(2), oxidation of toxic reductants, biosynthesis and degradation of lignin, suberization, auxin catabolism, response to environmental stresses such as wounding, pathogen attack and oxidative stress. These functions might be dependent on each isozyme/isoform in each plant tissue. This chain is Peroxidase 10 (PER10), found in Arabidopsis thaliana (Mouse-ear cress).